The primary structure comprises 100 residues: Small ribosomal subunit protein bS20 (100 aa).

Positions 1–22 (MASGKPKKKNPRLASGRKRARQ) are enriched in basic residues. A disordered region spans residues 1–26 (MASGKPKKKNPRLASGRKRARQGLKL).

This sequence belongs to the bacterial ribosomal protein bS20 family.

In terms of biological role, binds directly to 16S ribosomal RNA. This is Small ribosomal subunit protein bS20 from Acidovorax ebreus (strain TPSY) (Diaphorobacter sp. (strain TPSY)).